Consider the following 359-residue polypeptide: Protein Wnt-8a (359 aa).

The N-terminal stretch at 1 to 25 (MNPCQIFASLVMSICCHILSSTAWS) is a signal peptide. Cys-55 and Cys-66 are oxidised to a cystine. N-linked (GlcNAc...) asparagine glycosylation occurs at Asn-104. Intrachain disulfides connect Cys-105–Cys-113, Cys-115–Cys-133, Cys-181–Cys-195, Cys-183–Cys-190, Cys-260–Cys-298, Cys-276–Cys-291, Cys-295–Cys-337, Cys-313–Cys-328, Cys-315–Cys-325, and Cys-320–Cys-321. The O-palmitoleoyl serine moiety is linked to residue Ser-187. Asn-263 and Asn-282 each carry an N-linked (GlcNAc...) asparagine glycan. Asn-348 carries an N-linked (GlcNAc...) asparagine glycan.

The protein belongs to the Wnt family. Palmitoleoylation is required for efficient binding to frizzled receptors. Depalmitoleoylation leads to Wnt signaling pathway inhibition. Post-translationally, proteolytic processing by tiki1 and tiki2 promotes oxidation and formation of large disulfide-bond oligomers, leading to inactivation of wnt8. In terms of tissue distribution, expressed in the margin of the pregastrula embryo destined to be the future mesoderm.

It is found in the secreted. The protein localises to the extracellular space. Its subcellular location is the extracellular matrix. Its function is as follows. Ligand for members of the frizzled family of seven transmembrane receptors. Required for mesoderm and neural ectoderm patterning during gastrulation. Involved in axis formation during embryonic development, via activation of canonical Wnt/CTNNB1 signaling. May be involved in the specification of the spatial patterns of expression of Gsc and other regulatory genes leading to the establishment of the embryonic axis. The polypeptide is Protein Wnt-8a (wnt8a) (Danio rerio (Zebrafish)).